A 313-amino-acid chain; its full sequence is Acetyl-coenzyme A carboxylase carboxyl transferase subunit beta (313 aa).

One can recognise a CoA carboxyltransferase N-terminal domain in the interval 24-293 (LWIKCPDSGQ…LETASKSVQP (270 aa)).

The protein belongs to the AccD/PCCB family. As to quaternary structure, acetyl-CoA carboxylase is a heterohexamer composed of biotin carboxyl carrier protein (AccB), biotin carboxylase (AccC) and two subunits each of ACCase subunit alpha (AccA) and ACCase subunit beta (AccD).

The protein localises to the cytoplasm. It carries out the reaction N(6)-carboxybiotinyl-L-lysyl-[protein] + acetyl-CoA = N(6)-biotinyl-L-lysyl-[protein] + malonyl-CoA. The protein operates within lipid metabolism; malonyl-CoA biosynthesis; malonyl-CoA from acetyl-CoA: step 1/1. In terms of biological role, component of the acetyl coenzyme A carboxylase (ACC) complex. Biotin carboxylase (BC) catalyzes the carboxylation of biotin on its carrier protein (BCCP) and then the CO(2) group is transferred by the transcarboxylase to acetyl-CoA to form malonyl-CoA. The chain is Acetyl-coenzyme A carboxylase carboxyl transferase subunit beta from Bradyrhizobium diazoefficiens (strain JCM 10833 / BCRC 13528 / IAM 13628 / NBRC 14792 / USDA 110).